Reading from the N-terminus, the 300-residue chain is Porphobilinogen deaminase (300 aa).

Cys-243 is subject to S-(dipyrrolylmethanemethyl)cysteine.

It belongs to the HMBS family. Monomer. It depends on dipyrromethane as a cofactor.

It catalyses the reaction 4 porphobilinogen + H2O = hydroxymethylbilane + 4 NH4(+). It functions in the pathway porphyrin-containing compound metabolism; protoporphyrin-IX biosynthesis; coproporphyrinogen-III from 5-aminolevulinate: step 2/4. In terms of biological role, tetrapolymerization of the monopyrrole PBG into the hydroxymethylbilane pre-uroporphyrinogen in several discrete steps. This Clostridium novyi (strain NT) protein is Porphobilinogen deaminase.